A 159-amino-acid polypeptide reads, in one-letter code: Ribosomal RNA large subunit methyltransferase H (159 aa).

S-adenosyl-L-methionine contacts are provided by residues leucine 76, glycine 108, and 127-132; that span reads FGRLTL.

The protein belongs to the RNA methyltransferase RlmH family. In terms of assembly, homodimer.

Its subcellular location is the cytoplasm. It catalyses the reaction pseudouridine(1915) in 23S rRNA + S-adenosyl-L-methionine = N(3)-methylpseudouridine(1915) in 23S rRNA + S-adenosyl-L-homocysteine + H(+). Specifically methylates the pseudouridine at position 1915 (m3Psi1915) in 23S rRNA. This Listeria monocytogenes serotype 4b (strain CLIP80459) protein is Ribosomal RNA large subunit methyltransferase H.